The chain runs to 185 residues: p53 apoptosis effector related to PMP-22 (185 aa).

Helical transmembrane passes span 13-33 (WILP…IAAQ), 74-94 (VAAL…ISLV), 105-125 (LPFI…ALII), and 143-163 (WAYG…ILFC).

This sequence belongs to the TMEM47 family.

The protein localises to the cell junction. The protein resides in the desmosome. It is found in the cell membrane. It localises to the cytoplasm. In terms of biological role, component of intercellular desmosome junctions. Positively regulates apoptosis in the early-stage embryo in response to UV irradiation, this is partially dependent on tp53 activation. Required for the survival of cell populations in the developing notochord and skin, therefore required for normal embryogenesis beyond 30 hpf. Acts as a positive regulator of endothelial cell apoptosis in response to blood flow-derived shear stress. The protein is p53 apoptosis effector related to PMP-22 of Danio rerio (Zebrafish).